The sequence spans 231 residues: Large ribosomal subunit protein uL1 (231 aa).

The protein belongs to the universal ribosomal protein uL1 family. As to quaternary structure, part of the 50S ribosomal subunit.

In terms of biological role, binds directly to 23S rRNA. The L1 stalk is quite mobile in the ribosome, and is involved in E site tRNA release. Its function is as follows. Protein L1 is also a translational repressor protein, it controls the translation of the L11 operon by binding to its mRNA. This chain is Large ribosomal subunit protein uL1, found in Pseudomonas aeruginosa (strain LESB58).